We begin with the raw amino-acid sequence, 581 residues long: NADP-dependent malic enzyme 1 (581 aa).

The Proton donor role is filled by Tyr-129. An NADP(+)-binding site is contributed by Arg-182. Lys-200 acts as the Proton acceptor in catalysis. Residues Glu-272, Asp-273, and Asp-296 each coordinate a divalent metal cation. NADP(+) is bound by residues Asp-296, 325-341, and Asn-437; that span reads LFLG…ELIA.

This sequence belongs to the malic enzymes family. In terms of assembly, homohexamers and homooctamers. The cofactor is Mg(2+). It depends on Mn(2+) as a cofactor. As to expression, specifically expressed in roots (only in steles of secondary roots).

The protein localises to the cytoplasm. The enzyme catalyses (S)-malate + NADP(+) = pyruvate + CO2 + NADPH. The catalysed reaction is oxaloacetate + H(+) = pyruvate + CO2. This Arabidopsis thaliana (Mouse-ear cress) protein is NADP-dependent malic enzyme 1 (NADP-ME1).